The following is a 160-amino-acid chain: 2-C-methyl-D-erythritol 2,4-cyclodiphosphate synthase (160 aa).

Asp-12 and His-14 together coordinate a divalent metal cation. Residues Asp-12 to His-14 and His-38 to Ser-39 each bind 4-CDP-2-C-methyl-D-erythritol 2-phosphate. Residue His-46 coordinates a divalent metal cation. 4-CDP-2-C-methyl-D-erythritol 2-phosphate contacts are provided by residues Asp-60–Gly-62, Phe-65–Asp-69, Thr-136–Glu-139, Phe-143, and Arg-146.

It belongs to the IspF family. Homotrimer. A divalent metal cation is required as a cofactor.

The enzyme catalyses 4-CDP-2-C-methyl-D-erythritol 2-phosphate = 2-C-methyl-D-erythritol 2,4-cyclic diphosphate + CMP. Its pathway is isoprenoid biosynthesis; isopentenyl diphosphate biosynthesis via DXP pathway; isopentenyl diphosphate from 1-deoxy-D-xylulose 5-phosphate: step 4/6. Its function is as follows. Involved in the biosynthesis of isopentenyl diphosphate (IPP) and dimethylallyl diphosphate (DMAPP), two major building blocks of isoprenoid compounds. Catalyzes the conversion of 4-diphosphocytidyl-2-C-methyl-D-erythritol 2-phosphate (CDP-ME2P) to 2-C-methyl-D-erythritol 2,4-cyclodiphosphate (ME-CPP) with a corresponding release of cytidine 5-monophosphate (CMP). The polypeptide is 2-C-methyl-D-erythritol 2,4-cyclodiphosphate synthase (Acinetobacter baumannii (strain AB307-0294)).